A 273-amino-acid chain; its full sequence is Large ribosomal subunit protein uL2 (273 aa).

Disordered stretches follow at residues 28-53 (KPFAPLVEKNSKSGGRNNNGRITTRH) and 221-273 (RGTA…RRSK). Residues 39 to 48 (KSGGRNNNGR) are compositionally biased toward low complexity.

Belongs to the universal ribosomal protein uL2 family. In terms of assembly, part of the 50S ribosomal subunit. Forms a bridge to the 30S subunit in the 70S ribosome.

Functionally, one of the primary rRNA binding proteins. Required for association of the 30S and 50S subunits to form the 70S ribosome, for tRNA binding and peptide bond formation. It has been suggested to have peptidyltransferase activity; this is somewhat controversial. Makes several contacts with the 16S rRNA in the 70S ribosome. The chain is Large ribosomal subunit protein uL2 from Salmonella agona (strain SL483).